Here is a 464-residue protein sequence, read N- to C-terminus: Putative F-box/LRR-repeat protein At3g59160 (464 aa).

In terms of domain architecture, F-box spans Lys12–Ser60. LRR repeat units follow at residues Thr172–Ser198, Met200–His225, Ser233–Glu258, Val336–Ser367, Thr368–Gly393, and Lys408–Tyr433.

In Arabidopsis thaliana (Mouse-ear cress), this protein is Putative F-box/LRR-repeat protein At3g59160.